The primary structure comprises 464 residues: MALLTAATRLLGAKNSSCLVLAARHASASSTNLKDVLSNLIPKEQARIKTFKQQHGKTVVGQITVDMMYGGMRGMKGLVYETSVLDPDEGIRFRGYSIPECQKMLPKAKGGEEPLPEGLFWLLVTGQMPTEEQVSWLSREWAKRAALPSHVVTMLDNFPTNLHPMSQLSAAITALNSESNFARAYAEGMNRAKYWELIYEDCMDLIAKLPCVAAKIYRNLYREGSSIGAIDSRLDWSHNFTNMLGYTDPQFTELMRLYLTIHSDHEGGNVSAHTSHLVGSALSDPYLSFAAAMNGLAGPLHGLANQEVLVWLTQLQKEVGKDVSDEKLRDYIWNTLNSGRVVPGYGHAVLRKTDPRYSCQREFALKHLPKDPMFKLVAQLYKIVPNILLEQGKAKNPWPNVDAHSGVLLQYYGMTEMNYYTVLFGVSRALGVLAQLIWSRALGFPLERPKSMSTDGLMKFVDSK.

A mitochondrion-targeting transit peptide spans 1 to 27; it reads MALLTAATRLLGAKNSSCLVLAARHAS. Residues 2–21 carry the SIFI-degron motif; that stretch reads ALLTAATRLLGAKNSSCLVL. Residue lysine 57 is modified to N6-succinyllysine. Lysine 76 carries the post-translational modification N6-acetyllysine; alternate. Position 76 is an N6-succinyllysine; alternate (lysine 76). Residues lysine 103 and lysine 193 each carry the N6-succinyllysine modification. Serine 226 carries the post-translational modification Phosphoserine. Histidine 301 is a catalytic residue. N6-acetyllysine; alternate is present on residues lysine 321 and lysine 327. N6-succinyllysine; alternate is present on residues lysine 321 and lysine 327. Histidine 347 is a catalytic residue. Position 356 (arginine 356) interacts with oxaloacetate. N6-acetyllysine; alternate is present on lysine 375. The residue at position 375 (lysine 375) is an N6-succinyllysine; alternate. Lysine 382 carries the post-translational modification N6-acetyllysine. N6-acetyllysine; alternate is present on lysine 393. Lysine 393 carries the post-translational modification N6-succinyllysine; alternate. At lysine 395 the chain carries N6,N6,N6-trimethyllysine. The active site involves aspartate 402. 2 residues coordinate oxaloacetate: arginine 428 and arginine 448. N6-succinyllysine is present on lysine 450. N6-acetyllysine; alternate is present on lysine 459. Position 459 is an N6-succinyllysine; alternate (lysine 459).

It belongs to the citrate synthase family. As to quaternary structure, homodimer. In terms of processing, methylated. Trimethylation at Lys-395 by CSKMT decreases citrate synthase activity. Post-translationally, in response to mitochondrial stress, the precursor protein is ubiquitinated by the SIFI complex in the cytoplasm before mitochondrial import, leading to its degradation. Within the SIFI complex, UBR4 initiates ubiquitin chain that are further elongated or branched by KCMF1.

It is found in the mitochondrion matrix. The enzyme catalyses oxaloacetate + acetyl-CoA + H2O = citrate + CoA + H(+). The protein operates within carbohydrate metabolism; tricarboxylic acid cycle; isocitrate from oxaloacetate: step 1/2. Key enzyme of the Krebs tricarboxylic acid cycle which catalyzes the synthesis of citrate from acetyl coenzyme A and oxaloacetate. The chain is Citrate synthase, mitochondrial (Cs) from Mus musculus (Mouse).